We begin with the raw amino-acid sequence, 73 residues long: uncharacterized protein (73 aa).

This sequence belongs to the asfivirus DP63R family.

This is an uncharacterized protein from Ornithodoros (relapsing fever ticks).